Reading from the N-terminus, the 245-residue chain is uncharacterized protein (245 aa).

A run of 2 helical transmembrane segments spans residues 29 to 51 (LVVLIVSFLSILFSAGYAFRIGM) and 61 to 83 (TILFYGFVAAAFHFILSLYLMLH).

It is found in the cell membrane. This is an uncharacterized protein from Treponema pallidum (strain Nichols).